Reading from the N-terminus, the 214-residue chain is Cytochrome c biogenesis ATP-binding export protein CcmA (214 aa).

In terms of domain architecture, ABC transporter spans 12–214 (LAAHALAFSR…TRMLTLEAAA (203 aa)). Position 44-51 (44-51 (GDNGAGKT)) interacts with ATP.

The protein belongs to the ABC transporter superfamily. CcmA exporter (TC 3.A.1.107) family. The complex is composed of two ATP-binding proteins (CcmA) and two transmembrane proteins (CcmB).

The protein resides in the cell inner membrane. It catalyses the reaction heme b(in) + ATP + H2O = heme b(out) + ADP + phosphate + H(+). Its function is as follows. Part of the ABC transporter complex CcmAB involved in the biogenesis of c-type cytochromes; once thought to export heme, this seems not to be the case, but its exact role is uncertain. Responsible for energy coupling to the transport system. The chain is Cytochrome c biogenesis ATP-binding export protein CcmA from Xanthomonas oryzae pv. oryzae (strain MAFF 311018).